The chain runs to 415 residues: Probable G-protein coupled receptor 19 (415 aa).

Residues 1-69 (MGFDHRMETD…LNPGEVATAS (69 aa)) lie on the Extracellular side of the membrane. Residues N25 and N52 are each glycosylated (N-linked (GlcNAc...) asparagine). The chain crosses the membrane as a helical span at residues 70 to 90 (IFFGALWLFSIFGNSLVCLVI). Topologically, residues 91–102 (HRSRRTQSTTNY) are cytoplasmic. The helical transmembrane segment at 103-123 (FVVSMACADLLISVASTPFVV) threads the bilayer. At 124–152 (LQFTTGRWTLGSAMCKVVRYFQYLTPGVQ) the chain is on the extracellular side. A disulfide bond links C138 and C210. Residues 153-173 (IYVLLSICIDRFYTIVYPLSF) traverse the membrane as a helical segment. Over 174-182 (KVSREKAKR) the chain is Cytoplasmic. The chain crosses the membrane as a helical span at residues 183-203 (MIAASWILDAAFVTPVFFFYG). Residues 204 to 221 (SNWDSHCNYFLPPSWEGT) lie on the Extracellular side of the membrane. Residues 222 to 242 (AYTVIHFLVGFVIPSVLIILF) form a helical membrane-spanning segment. Residues 243 to 277 (YQKVIKYIWRIGTDGRTLRRTMNIVPRTKVKTVKM) lie on the Cytoplasmic side of the membrane. A helical membrane pass occupies residues 278–298 (FLLLNLVFLFSWLPFHVAQLW). The Extracellular portion of the chain corresponds to 299 to 309 (HPHEQDYRKSS). Residues 310–332 (LVFTAVTWVSFSSSASKPTLYSI) traverse the membrane as a helical segment. The Cytoplasmic portion of the chain corresponds to 333–415 (YNANFRRGMK…INSNPPNTFV (83 aa)).

It belongs to the G-protein coupled receptor 1 family. As to expression, abundant expression in the brain.

It localises to the cell membrane. G-protein coupled receptor that plays a role in the regulation of circadian rhythms and energy metabolism. Participates in maintaining proper circadian gene expression in the suprachiasmatic nucleus (SCN), the locus of the master circadian clock in the brain. May function as a coordinator of aging-associated metabolic dysfunction, stress response, DNA integrity management, and eventual senescence. Upon binding to adropin, modulates mitochondrial energy metabolism via the p44/42-PDK4 signaling pathway, influencing pyruvate dehydrogenase activity. The chain is Probable G-protein coupled receptor 19 (Gpr19) from Rattus norvegicus (Rat).